A 204-amino-acid polypeptide reads, in one-letter code: Large ribosomal subunit protein eL15 (204 aa).

This sequence belongs to the eukaryotic ribosomal protein eL15 family.

The chain is Large ribosomal subunit protein eL15 (RpL15) from Chironomus tentans (Midge).